A 570-amino-acid polypeptide reads, in one-letter code: Nucleoprotein (570 aa).

Residues 54-241 are binding site for the cap structure m7GTP; it reads MRKQKRDDGD…IDTKKSSLNI (188 aa). 2 residues coordinate Mn(2+): Asp-390 and Glu-392. Glu-400, Cys-507, His-510, and Cys-530 together coordinate Zn(2+). Asp-534 lines the Mn(2+) pocket.

Belongs to the arenaviridae nucleocapsid protein family. In terms of assembly, homomultimerizes to form the nucleocapsid. Binds to viral genomic RNA. Interacts with glycoprotein G2. Interacts with protein Z; this interaction probably directs the encapsidated genome to budding sites. Interacts with protein L; this interaction does not interfere with Z-L interaction. Interacts with host IKBKE (via Protein kinase domain); the interaction inhibits IKBKE kinase activity.

It localises to the virion. The protein resides in the host cytoplasm. In terms of biological role, encapsidates the genome, protecting it from nucleases. The encapsidated genomic RNA is termed the nucleocapsid (NC). Serves as template for viral transcription and replication. The increased presence of protein N in host cell does not seem to trigger the switch from transcription to replication as observed in other negative strain RNA viruses. Through the interaction with host IKBKE, strongly inhibits the phosphorylation and nuclear translocation of host IRF3, a protein involved in interferon activation pathway, leading to the inhibition of interferon-beta and IRF3-dependent promoters activation. Also encodes a functional 3'-5' exoribonuclease that degrades preferentially dsRNA substrates and thereby participates in the suppression of interferon induction. This is Nucleoprotein from Homo sapiens (Human).